A 354-amino-acid chain; its full sequence is 3-isopropylmalate dehydrogenase (354 aa).

The substrate site is built by arginine 96, arginine 106, arginine 132, and aspartate 223. Mg(2+)-binding residues include aspartate 223, aspartate 247, and aspartate 251. Residue 283-295 (GSAPDIAGQGKAD) coordinates NAD(+).

This sequence belongs to the isocitrate and isopropylmalate dehydrogenases family. LeuB type 2 subfamily. In terms of assembly, homodimer. Mg(2+) serves as cofactor. It depends on Mn(2+) as a cofactor.

It is found in the cytoplasm. The enzyme catalyses (2R,3S)-3-isopropylmalate + NAD(+) = 4-methyl-2-oxopentanoate + CO2 + NADH. It participates in amino-acid biosynthesis; L-leucine biosynthesis; L-leucine from 3-methyl-2-oxobutanoate: step 3/4. Functionally, catalyzes the oxidation of 3-carboxy-2-hydroxy-4-methylpentanoate (3-isopropylmalate) to 3-carboxy-4-methyl-2-oxopentanoate. The product decarboxylates to 4-methyl-2 oxopentanoate. This chain is 3-isopropylmalate dehydrogenase, found in Thermobifida fusca (strain YX).